The sequence spans 276 residues: Proteasome subunit beta type-8 (276 aa).

Residues 1–72 (MALLEVCGAP…KNIRKEMVHG (72 aa)) constitute a propeptide, removed in mature form. The active-site Nucleophile is the T73.

It belongs to the peptidase T1B family. In terms of assembly, the 26S proteasome consists of a 20S proteasome core and two 19S regulatory subunits. The 20S proteasome core is composed of 28 subunits that are arranged in four stacked rings, resulting in a barrel-shaped structure. The two end rings are each formed by seven alpha subunits, and the two central rings are each formed by seven beta subunits. The catalytic chamber with the active sites is on the inside of the barrel. Component of the immunoproteasome, where it displaces the equivalent housekeeping subunit PSMB5. Component of the spermatoproteasome, a form of the proteasome specifically found in testis. Directly interacts with POMP. Post-translationally, autocleaved. The resulting N-terminal Thr residue of the mature subunit is responsible for the nucleophile proteolytic activity.

It is found in the cytoplasm. The protein resides in the nucleus. The catalysed reaction is Cleavage of peptide bonds with very broad specificity.. Functionally, the proteasome is a multicatalytic proteinase complex which is characterized by its ability to cleave peptides with Arg, Phe, Tyr, Leu, and Glu adjacent to the leaving group at neutral or slightly basic pH. The proteasome has an ATP-dependent proteolytic activity. This subunit is involved in antigen processing to generate class I binding peptides. May participate in the generation of spliced peptides resulting from the ligation of two separate proteasomal cleavage products that are not contiguous in the parental protein. Required for adipocyte differentiation. The chain is Proteasome subunit beta type-8 (PSMB8) from Canis lupus familiaris (Dog).